The primary structure comprises 205 residues: Urease accessory protein UreE (205 aa).

The segment covering 178 to 196 (AHFHAGGHGHVHSGHGHGG) has biased composition (basic residues). The disordered stretch occupies residues 178 to 205 (AHFHAGGHGHVHSGHGHGGKHGEHDAES).

This sequence belongs to the UreE family.

The protein localises to the cytoplasm. Involved in urease metallocenter assembly. Binds nickel. Probably functions as a nickel donor during metallocenter assembly. The sequence is that of Urease accessory protein UreE from Bordetella pertussis (strain Tohama I / ATCC BAA-589 / NCTC 13251).